Reading from the N-terminus, the 370-residue chain is Uroporphyrinogen decarboxylase (370 aa).

Residues 29-33, D79, Y155, S210, and H342 contribute to the substrate site; that span reads RQAGR.

This sequence belongs to the uroporphyrinogen decarboxylase family. As to quaternary structure, homodimer.

The protein localises to the cytoplasm. It carries out the reaction uroporphyrinogen III + 4 H(+) = coproporphyrinogen III + 4 CO2. Its pathway is porphyrin-containing compound metabolism; protoporphyrin-IX biosynthesis; coproporphyrinogen-III from 5-aminolevulinate: step 4/4. Its function is as follows. Catalyzes the decarboxylation of four acetate groups of uroporphyrinogen-III to yield coproporphyrinogen-III. In Verminephrobacter eiseniae (strain EF01-2), this protein is Uroporphyrinogen decarboxylase.